A 458-amino-acid polypeptide reads, in one-letter code: Kelch repeat and BTB domain-containing protein 13 (458 aa).

Residues 7 to 74 (TLVQVWVGGQ…LRGDRPALAA (68 aa)) enclose the BTB domain. 5 Kelch repeats span residues 159-209 (AVST…TLGN), 210-258 (KLYI…GFDG), 259-305 (RLYA…QACG), 307-350 (LFVC…VAHR), and 352-400 (SLYV…VVRG).

In terms of assembly, component of the BCR(KBTBD13) E3 ubiquitin ligase complex, at least composed of CUL3 and KBTBD13 and RBX1. Interacts with CUL3. In terms of processing, autoubiquitinated. As to expression, expressed in skeletal muscle.

Its subcellular location is the cytoplasm. It functions in the pathway protein modification; protein ubiquitination. In terms of biological role, substrate-specific adapter of a BCR (BTB-CUL3-RBX1) E3 ubiquitin ligase complex. This is Kelch repeat and BTB domain-containing protein 13 (KBTBD13) from Homo sapiens (Human).